Consider the following 219-residue polypeptide: Non-specific lipid transfer protein GPI-anchored 25 (219 aa).

The N-terminal stretch at 1-22 (MATKITGVFILILTITFSSSSA) is a signal peptide. Cystine bridges form between Cys39/Cys85, Cys49/Cys68, Cys69/Cys110, and Cys83/Cys123. The N-linked (GlcNAc...) asparagine glycan is linked to Asn59. Residue Asn148 is glycosylated (N-linked (GlcNAc...) asparagine). Residues 152–181 (SPQSVDLAPEVSPSSDLFSPETATLAPPPP) form a disordered region. Ser192 is lipidated: GPI-anchor amidated serine. Residues 193 to 219 (SDSLKIRNFWFPSTIIMTFATSILARI) constitute a propeptide, removed in mature form.

The protein belongs to the plant LTP family.

The protein resides in the cell membrane. Probable lipid transfer protein. This is Non-specific lipid transfer protein GPI-anchored 25 from Arabidopsis thaliana (Mouse-ear cress).